The chain runs to 218 residues: Molybdenum cofactor guanylyltransferase (218 aa).

Residues 16-18 (LAG), Lys-28, Asn-56, Asp-74, and Asp-109 each bind GTP. Asp-109 provides a ligand contact to Mg(2+).

This sequence belongs to the MobA family. Monomer. Mg(2+) is required as a cofactor.

The protein resides in the cytoplasm. The enzyme catalyses Mo-molybdopterin + GTP + H(+) = Mo-molybdopterin guanine dinucleotide + diphosphate. Its function is as follows. Transfers a GMP moiety from GTP to Mo-molybdopterin (Mo-MPT) cofactor (Moco or molybdenum cofactor) to form Mo-molybdopterin guanine dinucleotide (Mo-MGD) cofactor. This is Molybdenum cofactor guanylyltransferase from Rhizobium meliloti (strain 1021) (Ensifer meliloti).